A 115-amino-acid chain; its full sequence is Large ribosomal subunit protein bL21 (115 aa).

Belongs to the bacterial ribosomal protein bL21 family. Part of the 50S ribosomal subunit. Contacts protein L20.

This protein binds to 23S rRNA in the presence of protein L20. This Picosynechococcus sp. (strain ATCC 27264 / PCC 7002 / PR-6) (Agmenellum quadruplicatum) protein is Large ribosomal subunit protein bL21.